The primary structure comprises 173 residues: tRNA-specific adenosine deaminase (173 aa).

The CMP/dCMP-type deaminase domain occupies 9–121 (EFDEKMMRYA…DYKTGAIGSR (113 aa)). His-61 contributes to the Zn(2+) binding site. Glu-63 serves as the catalytic Proton donor. 2 residues coordinate Zn(2+): Cys-91 and Cys-94.

The protein belongs to the cytidine and deoxycytidylate deaminase family. In terms of assembly, homodimer. Requires Zn(2+) as cofactor.

The enzyme catalyses adenosine(34) in tRNA + H2O + H(+) = inosine(34) in tRNA + NH4(+). Catalyzes the deamination of adenosine to inosine at the wobble position 34 of tRNA(Arg2). The protein is tRNA-specific adenosine deaminase of Haemophilus influenzae (strain ATCC 51907 / DSM 11121 / KW20 / Rd).